The following is a 160-amino-acid chain: Troponin C, skeletal muscle (160 aa).

At Thr2 the chain carries N-acetylthreonine. EF-hand domains follow at residues 15 to 50 (EMIA…LGQT), 51 to 86 (PTKE…QMKE), 91 to 126 (KSEE…SGEH), and 127 to 160 (VTDE…EGVQ). Ca(2+)-binding residues include Asp28, Asp30, Asp34, Glu39, Asp64, Asp66, Ser68, Thr70, Glu75, Asp104, Asn106, Asp108, Tyr110, Glu115, Asp140, Asn142, Asp144, Arg146, and Glu151.

Belongs to the troponin C family.

Its function is as follows. Troponin is the central regulatory protein of striated muscle contraction. Tn consists of three components: Tn-I which is the inhibitor of actomyosin ATPase, Tn-T which contains the binding site for tropomyosin and Tn-C. The binding of calcium to Tn-C abolishes the inhibitory action of Tn on actin filaments. In Oryctolagus cuniculus (Rabbit), this protein is Troponin C, skeletal muscle (TNNC2).